A 502-amino-acid chain; its full sequence is ATP synthase subunit alpha (502 aa).

An ATP-binding site is contributed by Gly169–Thr176.

This sequence belongs to the ATPase alpha/beta chains family. As to quaternary structure, F-type ATPases have 2 components, CF(1) - the catalytic core - and CF(0) - the membrane proton channel. CF(1) has five subunits: alpha(3), beta(3), gamma(1), delta(1), epsilon(1). CF(0) has three main subunits: a(1), b(2) and c(9-12). The alpha and beta chains form an alternating ring which encloses part of the gamma chain. CF(1) is attached to CF(0) by a central stalk formed by the gamma and epsilon chains, while a peripheral stalk is formed by the delta and b chains.

It localises to the cell membrane. The enzyme catalyses ATP + H2O + 4 H(+)(in) = ADP + phosphate + 5 H(+)(out). Functionally, produces ATP from ADP in the presence of a proton gradient across the membrane. The alpha chain is a regulatory subunit. This is ATP synthase subunit alpha from Bacillus sp. (strain PS3).